A 243-amino-acid polypeptide reads, in one-letter code: Large ribosomal subunit protein uL2 (243 aa).

Disordered regions lie at residues 1–23 (MGKR…PSHR) and 204–243 (PFGG…GGRR). Over residues 228–243 (KVGHIAARKTGRGGRR) the composition is skewed to basic residues.

It belongs to the universal ribosomal protein uL2 family. In terms of assembly, part of the 50S ribosomal subunit. Forms a bridge to the 30S subunit in the 70S ribosome.

In terms of biological role, one of the primary rRNA binding proteins. Required for association of the 30S and 50S subunits to form the 70S ribosome, for tRNA binding and peptide bond formation. It has been suggested to have peptidyltransferase activity; this is somewhat controversial. Makes several contacts with the 16S rRNA in the 70S ribosome. The sequence is that of Large ribosomal subunit protein uL2 from Methanopyrus kandleri (strain AV19 / DSM 6324 / JCM 9639 / NBRC 100938).